The chain runs to 869 residues: Sodium-dependent phosphate transporter (869 aa).

Topologically, residues methionine 1–glutamate 18 are extracellular. The helical transmembrane segment at tyrosine 19–alanine 39 threads the bilayer. Residues asparagine 40 to alanine 54 lie on the Cytoplasmic side of the membrane. Residues isoleucine 55–leucine 75 traverse the membrane as a helical segment. Residues glycine 76–proline 97 are Extracellular-facing. The chain crosses the membrane as a helical span at residues serine 98–alanine 118. Topologically, residues asparagine 119–histidine 120 are cytoplasmic. The chain crosses the membrane as a helical span at residues leucine 121–alanine 141. Residues serine 142 to alanine 154 lie on the Extracellular side of the membrane. The chain crosses the membrane as a helical span at residues phenylalanine 155 to phenylalanine 175. The Cytoplasmic segment spans residues valine 176–leucine 196. A helical membrane pass occupies residues tryptophan 197–phenylalanine 217. Residues glutamate 218–threonine 250 lie on the Extracellular side of the membrane. A helical membrane pass occupies residues alanine 251–tyrosine 271. Topologically, residues arginine 272 to serine 720 are cytoplasmic. Disordered stretches follow at residues lysine 286–leucine 312, alanine 374–valine 401, and serine 453–arginine 571. A compositionally biased stretch (low complexity) spans serine 457 to proline 481. The segment covering arginine 482–proline 491 has biased composition (pro residues). Positions arginine 492–serine 509 are enriched in low complexity. A compositionally biased stretch (basic and acidic residues) spans proline 556–arginine 571. The chain crosses the membrane as a helical span at residues proline 721–tyrosine 741. Residues arginine 742–glycine 759 are Extracellular-facing. Residues phenylalanine 760–leucine 780 traverse the membrane as a helical segment. The Cytoplasmic segment spans residues serine 781–glycine 837. A helical membrane pass occupies residues glycine 838–phenylalanine 858. The Extracellular segment spans residues serine 859–serine 869.

The protein belongs to the inorganic phosphate transporter (PiT) (TC 2.A.20) family.

It localises to the cell membrane. The protein localises to the vacuole membrane. Its subcellular location is the cytoplasmic vesicle membrane. The enzyme catalyses 2 Na(+)(out) + phosphate(out) = 2 Na(+)(in) + phosphate(in). Sodium-phosphate symporter which preferentially transports the monovalent form of phosphate with a stoichiometry of two sodium ions per phosphate ion. Plays a role in stabilizing the cytosolic pH and osmoregulation. May be required for optimal virulence of parasites in vivo. This is Sodium-dependent phosphate transporter from Toxoplasma gondii (strain ATCC 50861 / VEG).